The primary structure comprises 219 residues: Protein GrpE (219 aa).

2 disordered regions span residues 1 to 32 (MSTT…LDAT) and 59 to 87 (FDGV…AERT).

Belongs to the GrpE family. Homodimer.

The protein resides in the cytoplasm. In terms of biological role, participates actively in the response to hyperosmotic and heat shock by preventing the aggregation of stress-denatured proteins, in association with DnaK and GrpE. It is the nucleotide exchange factor for DnaK and may function as a thermosensor. Unfolded proteins bind initially to DnaJ; upon interaction with the DnaJ-bound protein, DnaK hydrolyzes its bound ATP, resulting in the formation of a stable complex. GrpE releases ADP from DnaK; ATP binding to DnaK triggers the release of the substrate protein, thus completing the reaction cycle. Several rounds of ATP-dependent interactions between DnaJ, DnaK and GrpE are required for fully efficient folding. The polypeptide is Protein GrpE (Corynebacterium diphtheriae (strain ATCC 700971 / NCTC 13129 / Biotype gravis)).